Reading from the N-terminus, the 198-residue chain is Large ribosomal subunit protein bL25 (198 aa).

This sequence belongs to the bacterial ribosomal protein bL25 family. CTC subfamily. Part of the 50S ribosomal subunit; part of the 5S rRNA/L5/L18/L25 subcomplex. Contacts the 5S rRNA. Binds to the 5S rRNA independently of L5 and L18.

Functionally, this is one of the proteins that binds to the 5S RNA in the ribosome where it forms part of the central protuberance. The protein is Large ribosomal subunit protein bL25 of Gloeothece citriformis (strain PCC 7424) (Cyanothece sp. (strain PCC 7424)).